A 170-amino-acid polypeptide reads, in one-letter code: MAKHDIEERGDGLTEKLIGVNRVTKVVKGGRIMAFSALTVVGDGDGGIGMGKGKSKEVPVAVQKAMDQARRSMVKIPLRNGTLQHAVIGKHGATTVFMQPAPEGSGVKAGGAMRQVFDAIGVHNVSAKVHGSTNPYNVVRATLNGLMKINTPADIAAKRGKTVAEILGAE.

In terms of domain architecture, S5 DRBM spans 13–76; sequence LTEKLIGVNR…DQARRSMVKI (64 aa).

This sequence belongs to the universal ribosomal protein uS5 family. As to quaternary structure, part of the 30S ribosomal subunit. Contacts proteins S4 and S8.

With S4 and S12 plays an important role in translational accuracy. Its function is as follows. Located at the back of the 30S subunit body where it stabilizes the conformation of the head with respect to the body. The polypeptide is Small ribosomal subunit protein uS5 (Laribacter hongkongensis (strain HLHK9)).